We begin with the raw amino-acid sequence, 580 residues long: Protein O-linked-mannose beta-1,4-N-acetylglucosaminyltransferase 2 (580 aa).

Residues 1–4 (MHLS) lie on the Cytoplasmic side of the membrane. Residues 5–25 (AVFNALLVSVLAAVLWKHVRL) traverse the membrane as a helical; Signal-anchor for type II membrane protein segment. At 26–580 (REHAATLEEE…PFADVLVCNT (555 aa)) the chain is on the lumenal side. Asparagine 99 and asparagine 276 each carry an N-linked (GlcNAc...) asparagine glycan. One can recognise a Fibronectin type-III domain in the interval 488 to 580 (ARCQASVHGA…PFADVLVCNT (93 aa)).

This sequence belongs to the glycosyltransferase 61 family. As to expression, highly expressed in the brain, muscle, heart, and kidney in both fetus and adult. In the brain, highest expression in the cortex and cerebellum. Highly expressed in the pancreas.

The protein resides in the endoplasmic reticulum membrane. The catalysed reaction is 3-O-(alpha-D-mannosyl)-L-threonyl-[protein] + UDP-N-acetyl-alpha-D-glucosamine = 3-O-(N-acetyl-beta-D-glucosaminyl-(1-&gt;4)-alpha-D-mannosyl)-L-threonyl-[protein] + UDP + H(+). It functions in the pathway protein modification; protein glycosylation. In terms of biological role, O-linked mannose beta-1,4-N-acetylglucosaminyltransferase that transfers UDP-N-acetyl-D-glucosamine to the 4-position of the mannose to generate N-acetyl-D-glucosamine-beta-1,4-O-D-mannosylprotein. Involved in the biosynthesis of the phosphorylated O-mannosyl trisaccharide (N-acetylgalactosamine-beta-3-N-acetylglucosamine-beta-4-(phosphate-6-)mannose), a carbohydrate structure present in alpha-dystroglycan (DAG1), which is required for binding laminin G-like domain-containing extracellular proteins with high affinity. The chain is Protein O-linked-mannose beta-1,4-N-acetylglucosaminyltransferase 2 (POMGNT2) from Homo sapiens (Human).